Reading from the N-terminus, the 103-residue chain is Acyl-CoA-binding protein (103 aa).

The ACB domain occupies 18–103; it reads HQADFDEAAE…AKTMVEKYGI (86 aa). Residues Lys-30, 45–49, Lys-67, Lys-71, and Tyr-90 contribute to the an acyl-CoA site; that span reads YGFYK.

Belongs to the ACBP family. As to quaternary structure, monomer.

It localises to the endoplasmic reticulum. Its subcellular location is the golgi apparatus. In terms of biological role, binds medium- and long-chain acyl-CoA esters with very high affinity and may function as an intracellular carrier of acyl-CoA esters. It is also able to displace diazepam from the benzodiazepine (BZD) recognition site located on the GABA type A receptor. It is therefore possible that this protein also acts as a neuropeptide to modulate the action of the GABA receptor. This is Acyl-CoA-binding protein (DBI) from Anas platyrhynchos (Mallard).